The following is a 247-amino-acid chain: tRNA pseudouridine synthase A 1 (247 aa).

Catalysis depends on aspartate 53, which acts as the Nucleophile. Tyrosine 111 provides a ligand contact to substrate.

The protein belongs to the tRNA pseudouridine synthase TruA family. Homodimer.

The catalysed reaction is uridine(38/39/40) in tRNA = pseudouridine(38/39/40) in tRNA. Functionally, formation of pseudouridine at positions 38, 39 and 40 in the anticodon stem and loop of transfer RNAs. This Bacillus cereus (strain ZK / E33L) protein is tRNA pseudouridine synthase A 1.